The following is a 255-amino-acid chain: SLA class II histocompatibility antigen, DQ haplotype D alpha chain (255 aa).

The signal sequence occupies residues 1-23; that stretch reads MVPGRVLMWGALALTAVMSACGG. Residues 24-120 are alpha-1; it reads EDIAADHVAS…QVPEVTVFPK (97 aa). Residues 24–217 are Extracellular-facing; sequence EDIAADHVAS…IPAPMSELTE (194 aa). N-linked (GlcNAc...) asparagine glycosylation is found at Asn104 and Asn144. In terms of domain architecture, Ig-like C1-type spans 113 to 205; that stretch reads PEVTVFPKSP…LDKPLLKHWE (93 aa). The alpha-2 stretch occupies residues 121–204; sequence SPVMLGQPNT…GLDKPLLKHW (84 aa). Cysteines 133 and 189 form a disulfide. Residues 205–217 form a connecting peptide region; the sequence is EPEIPAPMSELTE. A helical membrane pass occupies residues 218–240; that stretch reads TVVCALGLIVGLVGIVVGTVFII. The Cytoplasmic portion of the chain corresponds to 241–255; sequence QGLRSGGPSRHQGSL.

The protein belongs to the MHC class II family.

It is found in the membrane. The chain is SLA class II histocompatibility antigen, DQ haplotype D alpha chain from Sus scrofa (Pig).